Reading from the N-terminus, the 1388-residue chain is ESX-5 secretion system protein EccC5 (1388 aa).

2 helical membrane-spanning segments follow: residues 38–58 (WLIV…AMVF) and 65–85 (FGGV…MMMF). FtsK domains lie at 477–679 (GELL…GAAQ), 855–1049 (QPPW…EDAK), and 1158–1351 (LQPV…DPDE). Residues 500–507 (GTTGSGKS), 873–880 (GAGGSGKT), and 1175–1182 (GRRECGRT) each bind ATP.

Part of the ESX-5 / type VII secretion system (T7SS), which is composed of cytosolic and membrane components. The ESX-5 membrane complex is composed of EccB5, EccC5, EccD5 and EccE5.

Its subcellular location is the cell inner membrane. Its function is as follows. Part of the ESX-5 specialized secretion system, which is responsible for the secretion of EsxN and a number of PE_PGRS and PPE proteins. This component is essential for ESX-5 complex stability and secretion. This Mycobacterium marinum (strain ATCC BAA-535 / M) protein is ESX-5 secretion system protein EccC5.